We begin with the raw amino-acid sequence, 410 residues long: Argininosuccinate synthase (410 aa).

ATP is bound by residues 13–21 (AYSGGLDTS) and Ala40. Residues Tyr91 and Ser96 each coordinate L-citrulline. Gly121 provides a ligand contact to ATP. 3 residues coordinate L-aspartate: Thr123, Asn127, and Asp128. Residue Asn127 coordinates L-citrulline. L-citrulline contacts are provided by Arg131, Ser182, Ser191, Glu267, and Tyr279.

Belongs to the argininosuccinate synthase family. Type 1 subfamily. As to quaternary structure, homotetramer.

The protein resides in the cytoplasm. It carries out the reaction L-citrulline + L-aspartate + ATP = 2-(N(omega)-L-arginino)succinate + AMP + diphosphate + H(+). Its pathway is amino-acid biosynthesis; L-arginine biosynthesis; L-arginine from L-ornithine and carbamoyl phosphate: step 2/3. The polypeptide is Argininosuccinate synthase (Maricaulis maris (strain MCS10) (Caulobacter maris)).